A 361-amino-acid polypeptide reads, in one-letter code: 5-formaminoimidazole-4-carboxamide-1-(beta)-D-ribofuranosyl 5'-monophosphate synthetase (361 aa).

5-amino-1-(5-phospho-beta-D-ribosyl)imidazole-4-carboxamide contacts are provided by His-27 and Ser-94. The ATP-grasp domain maps to 116 to 348 (RAILRWEAER…MGQRIAKEIK (233 aa)). ATP is bound by residues 146–208 (PDEI…ANYC) and Glu-230. Asn-258 contributes to the 5-amino-1-(5-phospho-beta-D-ribosyl)imidazole-4-carboxamide binding site. Mg(2+) contacts are provided by Gln-297 and Glu-310.

Belongs to the phosphohexose mutase family. Mg(2+) is required as a cofactor. It depends on Mn(2+) as a cofactor.

It catalyses the reaction 5-amino-1-(5-phospho-beta-D-ribosyl)imidazole-4-carboxamide + formate + ATP = 5-formamido-1-(5-phospho-D-ribosyl)imidazole-4-carboxamide + ADP + phosphate. It participates in purine metabolism; IMP biosynthesis via de novo pathway; 5-formamido-1-(5-phospho-D-ribosyl)imidazole-4-carboxamide from 5-amino-1-(5-phospho-D-ribosyl)imidazole-4-carboxamide (formate route): step 1/1. Functionally, catalyzes the ATP- and formate-dependent formylation of 5-aminoimidazole-4-carboxamide-1-beta-d-ribofuranosyl 5'-monophosphate (AICAR) to 5-formaminoimidazole-4-carboxamide-1-beta-d-ribofuranosyl 5'-monophosphate (FAICAR) in the absence of folates. The polypeptide is 5-formaminoimidazole-4-carboxamide-1-(beta)-D-ribofuranosyl 5'-monophosphate synthetase (Methanococcus vannielii (strain ATCC 35089 / DSM 1224 / JCM 13029 / OCM 148 / SB)).